The sequence spans 112 residues: Putative RNase TTE0752 (112 aa).

Active-site residues include Arg-74 and His-79. Residues 74 to 81 (RDKLIHEY) carry the RX(4)HXY motif motif. Tyr-81 is modified (O-di-AMP-tyrosine).

It belongs to the HepT RNase toxin family. In terms of assembly, homodimer, probably forms a complex with cognate antitoxin TTE0751. Post-translationally, modified by cognate antitoxin TTE0751; probably at least 2 successive AMPylation events occur on Tyr-81.

Functionally, probable toxic component of a putative type VII toxin-antitoxin (TA) system, probably an RNase. Probably neutralized by cognate antitoxin TTE0751. Neutralization may be due to AMPylation by TTE0751. This is Putative RNase TTE0752 from Caldanaerobacter subterraneus subsp. tengcongensis (strain DSM 15242 / JCM 11007 / NBRC 100824 / MB4) (Thermoanaerobacter tengcongensis).